The chain runs to 141 residues: Short-chain diamines transporter (141 aa).

The next 4 membrane-spanning stretches (helical) occupy residues 16–36 (VILL…PLEV), 39–59 (TLGI…NHFF), 76–96 (ILHA…MVAY), and 103–123 (WQAI…TFIF).

It belongs to the proteobacterial antimicrobial compound efflux (PACE) (TC 2.A.117) family.

The protein localises to the cell inner membrane. Functionally, mediates the efflux of short-chain diamines when energized by an electrochemical gradient. Involved in resistance to the synthetic biocide chlorhexidine, a widely used antiseptic and disinfectant in both hospital and community settings. Interacts directly with chlorhexidine and mediates its efflux via an energy-dependent mechanism. The polypeptide is Short-chain diamines transporter (Acinetobacter baylyi (strain ATCC 33305 / BD413 / ADP1)).